Here is a 1026-residue protein sequence, read N- to C-terminus: MSGFALFINRPVATSLLALAITLVGLLGLRLLPVAPLPQVDFPVIMVSASLPGASAETMAASVAMPLERALGRIAGVNEMTSSSSLGTTRIILQFNLDRNIDGAARDVQAALNAAQSLLPSGMPSRPSYRKANPSDAPIAILTLTSAQYSQGDLYDLASTRLAQKIAQINGVGDVSVSGSSLPAVRIDLNPDALFNQGTSLDTVRQAIASANVRRPLGAVADDGRRWQVQSNDALMTAQEYRPLIIRYRDGAPLRLQDVARISDGVEDVRNAGMSNGQPAILIMIRRSADANIIETVDRLRSDLPALQALLPGGVSLDIAQDRTPTIRASLREVEQSLAIAIALVILVVFLFLRSARATLIPAVTVPVSLIGTCAAIYLCGFSLNNLSLMALTIASGFVVDDAIVVLENIARHIEDGLSPHRAALAGVREVGFTVFSISLSLAAVFIPLLFMGGIPGRLFHEFAITLSASIAISLLIALTLTPMMCARLLRPRHTDGGMRPTALRRLSALLQRGYALSLNWTLDHARWVLLTLLAVIGLNIWLYISIPKTFFPQQDTGRLMGFIQADQSISFQAMRGKLQDFMHIVRADPDVDNVTGFTGGTRVNSGMMFIALKPLGERKQDAQQVIARLRTRLSHEPGANLFLMAVQDIRAGGRQGNASYQYTLLSDDLAVLRHWEPQVRKALAALPQLTDVSTDQQDKGTEMLLTYDRPAMARLGIKVSEVNTLLSNAFGQRQISTLYQPLNQYHVVMEVDPRYAQDERALDKMFIINQAGQPIPLSGFASWLPANAPLSVNHQGLSAAATISFNLPPGGSLSDASDAIAHAMTALGTPPSLRGTFAGTALLFQQAQSSQLLLILAAIATVYIVLGILYESYIHPLTILSTLPSAGVGALLALMLFNAPFSLIALIGIMLLIGLVKKNAILLVDFALTAEREQHLSARDAIYQACLLRFRPILMTTLAALFGALPLAFSYGDGAELRQPLGITIVGGLLVSQILTLYTTPVVYLYMEKLRARFSRQKALPPLAY.

Transmembrane regions (helical) follow at residues 16–36, 333–353, 360–380, 387–407, 435–455, 459–479, 528–548, 853–873, 897–917, 953–973, and 984–1004; these read LLAL…PVAP, EVEQ…FLFL, LIPA…IYLC, LSLM…IVVL, VFSI…MGGI, LFHE…LIAL, WVLL…ISIP, LLLI…LYES, LFNA…IGLV, PILM…FSYG, and ITIV…TPVV.

The protein belongs to the resistance-nodulation-cell division (RND) (TC 2.A.6) family. MdtC subfamily. As to quaternary structure, part of a tripartite efflux system composed of MdtA, MdtB and MdtC. MdtC forms a heteromultimer with MdtB.

The protein resides in the cell inner membrane. This is Multidrug resistance protein MdtC from Edwardsiella ictaluri (strain 93-146).